Reading from the N-terminus, the 428-residue chain is Adenylosuccinate synthetase (428 aa).

GTP is bound by residues Gly-12–Lys-18 and Gly-40–Thr-42. The Proton acceptor role is filled by Asp-13. Residues Asp-13 and Gly-40 each coordinate Mg(2+). IMP is bound by residues Asp-13–Lys-16, Asn-38–His-41, Thr-128, Arg-142, Gln-223, Thr-238, and Arg-302. His-41 (proton donor) is an active-site residue. Thr-298 to Arg-304 is a substrate binding site. Residues Arg-304, Ser-330–Asp-332, and Ser-412–Gly-414 contribute to the GTP site.

Belongs to the adenylosuccinate synthetase family. In terms of assembly, homodimer. It depends on Mg(2+) as a cofactor.

It is found in the cytoplasm. It catalyses the reaction IMP + L-aspartate + GTP = N(6)-(1,2-dicarboxyethyl)-AMP + GDP + phosphate + 2 H(+). It functions in the pathway purine metabolism; AMP biosynthesis via de novo pathway; AMP from IMP: step 1/2. Functionally, plays an important role in the de novo pathway of purine nucleotide biosynthesis. Catalyzes the first committed step in the biosynthesis of AMP from IMP. This Shouchella clausii (strain KSM-K16) (Alkalihalobacillus clausii) protein is Adenylosuccinate synthetase.